Reading from the N-terminus, the 227-residue chain is Putative ankyrin repeat protein L45 (227 aa).

ANK repeat units lie at residues 38 to 66, 78 to 107, 108 to 137, 139 to 167, 168 to 197, and 199 to 227; these read FETN…NINH, CLEE…NIFH, NENC…DVRA, NDYA…DVRS, CDSY…NYRA, and NHHA…GITK.

The polypeptide is Putative ankyrin repeat protein L45 (Acanthamoeba polyphaga mimivirus (APMV)).